A 361-amino-acid polypeptide reads, in one-letter code: Serine/threonine-protein kinase SAPK9 (361 aa).

Positions 22 to 278 (YELVKEIGSG…MPEIKNHPWF (257 aa)) constitute a Protein kinase domain. ATP-binding positions include 28–36 (IGSGNFGVA) and K51. The Proton acceptor role is filled by D141.

The protein belongs to the protein kinase superfamily. Ser/Thr protein kinase family. As to quaternary structure, interacts with BZIP46. Post-translationally, may be phosphorylated. In terms of tissue distribution, expressed in leaf sheaths and roots. Expressed in shoots of young seedlings.

It localises to the cytoplasm. The protein localises to the nucleus. It catalyses the reaction L-seryl-[protein] + ATP = O-phospho-L-seryl-[protein] + ADP + H(+). It carries out the reaction L-threonyl-[protein] + ATP = O-phospho-L-threonyl-[protein] + ADP + H(+). Its activity is regulated as follows. Activated by hyperosmotic stress and abscisic acid (ABA). Functionally, may play a role in signal transduction of hyperosmotic response. Can phosphorylate BZIP46 in vitro. The sequence is that of Serine/threonine-protein kinase SAPK9 (SAPK9) from Oryza sativa subsp. japonica (Rice).